The following is a 383-amino-acid chain: Guanine nucleotide-binding protein alpha-1 subunit (383 aa).

A disordered region spans residues 1-20 (MGLLCSRSRHHTEDTDENTQ). Gly2 carries N-myristoyl glycine lipidation. Cys5 carries the S-palmitoyl cysteine lipid modification. One can recognise a G-alpha domain in the interval 37–383 (HIRKLLLLGA…RRNLLEAGLL (347 aa)). Positions 40 to 53 (KLLLLGAGESGKST) are G1 motif. Residues Glu48, Ser49, Gly50, Lys51, Ser52, Thr53, Asp162, Leu187, Tyr188, Thr193, Gly221, Asn287, Lys288, Asp290, and Ala355 each coordinate GTP. Ser52 provides a ligand contact to Mg(2+). Residues 185–193 (DVLYARVRT) form a G2 motif region. Thr193 is a Mg(2+) binding site. The segment at 214–223 (YRLFDVGGQR) is G3 motif. The G4 motif stretch occupies residues 283–290 (MLFLNKFD). The G5 motif stretch occupies residues 353 to 358 (TTALDQ).

The protein belongs to the G-alpha family. In terms of assembly, g proteins are composed of 3 units; alpha, beta and gamma. The alpha chain contains the guanine nucleotide binding site. Interacts with RGS1, THF1, the pirin protein PRN1, GTG1 and GTG2. Binds to GCR1. May interact with ADT3. No interactions with RACK1A, RACK1B or RACK1C. Interacts with PLDALPHA1. Interacts with CAND2/PMTR1. It depends on Mg(2+) as a cofactor. As to expression, more abundant in roots and/or leaves.

The protein localises to the cell membrane. Exhibits a fast rate of basal nucleotide exchange. Guanine nucleotide-binding proteins (G proteins) are involved as modulators or transducers in various transmembrane signaling systems. Together with GCR1, may regulate the cell cycle via a signaling cascade that uses phosphatidylinositol-specific phospholipase C (PI-PLC) as an effector and inositol 1,4,5-trisphosphate (IP(3)) as a second messenger. Promotes abscisic acid (ABA) responses in guard cells. Involved in the blue light (BL) signaling. Together with GCR1 and ADT3, required for BL-mediated synthesis of phenylpyruvate and subsequently of phenylalanine (Phe), in etiolated seedlings. Modulates root architecture (e.g. lateral root formation). Negatively regulated by RGS1. In collaboration with CAND2/PMTR1, regulates the melatonin-mediated stomatal closure involving H(2)O(2) and Ca(2+) signals. This Arabidopsis thaliana (Mouse-ear cress) protein is Guanine nucleotide-binding protein alpha-1 subunit.